The following is a 1402-amino-acid chain: DNA-directed RNA polymerase subunit beta' (1402 aa).

4 residues coordinate Zn(2+): C71, C73, C86, and C89. The Mg(2+) site is built by D462, D464, and D466. 4 residues coordinate Zn(2+): C811, C885, C892, and C895.

It belongs to the RNA polymerase beta' chain family. In terms of assembly, the RNAP catalytic core consists of 2 alpha, 1 beta, 1 beta' and 1 omega subunit. When a sigma factor is associated with the core the holoenzyme is formed, which can initiate transcription. Mg(2+) serves as cofactor. It depends on Zn(2+) as a cofactor.

The catalysed reaction is RNA(n) + a ribonucleoside 5'-triphosphate = RNA(n+1) + diphosphate. In terms of biological role, DNA-dependent RNA polymerase catalyzes the transcription of DNA into RNA using the four ribonucleoside triphosphates as substrates. The sequence is that of DNA-directed RNA polymerase subunit beta' from Bartonella henselae (strain ATCC 49882 / DSM 28221 / CCUG 30454 / Houston 1) (Rochalimaea henselae).